The sequence spans 1338 residues: Thioester-containing protein 1 allele S3 (1338 aa).

The first 21 residues, 1–21 (MWQFIRSRILTVIIFIGAAHG), serve as a signal peptide directing secretion. Asn-68, Asn-199, Asn-242, Asn-312, and Asn-481 each carry an N-linked (GlcNAc...) asparagine glycan. A may contain the cleavage site region spans residues 580–609 (ENEFDIFHSLGLFARTLDDILFDSANEKTG). 4 N-linked (GlcNAc...) asparagine glycosylation sites follow: Asn-637, Asn-728, Asn-813, and Asn-828. The segment at residues 859 to 862 (CGEQ) is a cross-link (isoglutamyl cysteine thioester (Cys-Gln)). 3 disulfide bridges follow: Cys-1217–Cys-1283, Cys-1326–Cys-1338, and Cys-1329–Cys-1334.

As to quaternary structure, heterodimer of a TEP1-N chain and an TEP1-C chain non-covalently linked. Forms a complex composed of TEP1-N and TEP1-C heterodimer, LRIM1 and APL1C; the interaction stabilizes TEP1-N and TEP1-C heterodimer, prevents its binding to tissues while circulating in the hemolymph and protects the thioester bond from hydrolysis. Mature TEP1 and to a lesser extent full-length TEP1 interact with SPCLIP1; the interaction is induced by microbial infection. In the hemolymph, the full-length protein is cleaved by an unknow protease into a 75kDa N-terminal (TEP1-N) chain and an 80kDa C-terminal (TEP1-C) chain which remain non-covalently linked. The TEP1-C chain contains the thioester bond which covalently binds to the pathogen surface. Cleavage is induced by bacterial infection or aseptic wound injury. During embryonic and pupal development, the cleaved form is the predominant form. Post-translationally, N-glycosylated.

The protein resides in the secreted. Functionally, plays an essential role in the innate immune response against bacteria, fungi and protozoa infection. After proteolytic cleavage, the protein C-terminus binds covalently through a thioester bond to the pathogen surface resulting in pathogen clearance either by melanization or lysis. Initiate the recruitment and activation of a cascade of proteases, mostly of CLIP-domain serine proteases, which leads to the proteolytic cleavage of the prophenoloxidase (PPO) into active phenoloxidase (PO), the rate-limiting enzyme in melanin biosynthesis. In response to parasite P.berghei-mediated infection, binds to and mediates killing of ookinetes, as they egress from midgut epithelial cells into the basal labyrinth, by both lysis and melanization. During bacterial infection, binds to both Gram-positive and Gram-negative bacteria but only promotes phagocytosis of Gram-negative bacteria. Promotes the accumulation of SPCLIP1 onto the surface of P.berghei ookinetes and bacterium E.coli which leads to the melanization of the pathogen. Recruits CLIPA2 to bacteria surface. In response to bacterial infection, required for periostial hemocyte aggregation, but not for the aggregation of sessile hemocytes in non-periostial regions. During the late stage of fungus B.bassiana-mediated infection, required for the initiation of hyphae melanization by binding to the surface of hyphae and recruiting prophenoloxidase PPO to them. Plays a role in male fertility by binding to defective sperm cells and promoting their removal during spermatogenesis. In terms of biological role, binds to and mediates killing of parasite P.bergei ookinetes by lysis. Its function is as follows. Binds covalently through a thioester bond to the pathogen surface resulting in pathogen clearance. This Anopheles gambiae (African malaria mosquito) protein is Thioester-containing protein 1 allele S3.